We begin with the raw amino-acid sequence, 314 residues long: 3'-5' exoribonuclease YhaM (314 aa).

Positions 22–90 (SSTKGIASNG…QLKLRNIRPV (69 aa)) form a DNA-binding region, OB. One can recognise an HD domain in the interval 163-279 (HVVSMLNLAK…LHYIDNLDAK (117 aa)).

The protein belongs to the YhaM family. It depends on Mn(2+) as a cofactor. The cofactor is Co(2+).

Functionally, shows a 3'-5' exoribonuclease activity as well as single-stranded DNA 3'-5'exonuclease activity. Plays a role in the secondary pathway of 23S rRNA 3' end maturation. The protein is 3'-5' exoribonuclease YhaM of Bacillus subtilis (strain 168).